A 140-amino-acid chain; its full sequence is Zinc finger SWIM domain-containing protein 7 (140 aa).

The segment at 76–114 (YTCFTSCHYCPCPAFSFTVLRRNESLMCKHLLAVILSQA) adopts an SWIM-type zinc-finger fold.

Belongs to the SWS1 family.

The protein localises to the nucleus. Functionally, involved in early stages of the homologous recombination repair (HRR) pathway of double-stranded DNA breaks arising during DNA replication or induced by DNA-damaging agents. This Danio rerio (Zebrafish) protein is Zinc finger SWIM domain-containing protein 7 (zswim7).